We begin with the raw amino-acid sequence, 955 residues long: Mediator of RNA polymerase II transcription subunit 16 (955 aa).

It belongs to the Mediator complex subunit 16 family. In terms of assembly, component of the Mediator complex.

The protein localises to the nucleus. Functionally, component of the Mediator complex, a coactivator involved in the regulated transcription of nearly all RNA polymerase II-dependent genes. Mediator functions as a bridge to convey information from gene-specific regulatory proteins to the basal RNA polymerase II transcription machinery. Mediator is recruited to promoters by direct interactions with regulatory proteins and serves as a scaffold for the assembly of a functional preinitiation complex with RNA polymerase II and the general transcription factors. The chain is Mediator of RNA polymerase II transcription subunit 16 (sin4) from Neosartorya fischeri (strain ATCC 1020 / DSM 3700 / CBS 544.65 / FGSC A1164 / JCM 1740 / NRRL 181 / WB 181) (Aspergillus fischerianus).